Consider the following 301-residue polypeptide: Protoheme IX farnesyltransferase (301 aa).

A run of 9 helical transmembrane segments spans residues 29-49 (VVAL…PGVV), 51-71 (IVPL…AAAF), 96-118 (VSIA…VLYV), 123-143 (LTAW…TAYL), 151-171 (IVVG…AVTG), 177-197 (ALLL…ALAI), 223-243 (CIFL…LVGM), 244-264 (CGPV…YKAW), and 281-301 (FSIY…YLWL).

It belongs to the UbiA prenyltransferase family. Protoheme IX farnesyltransferase subfamily.

The protein localises to the cell inner membrane. The catalysed reaction is heme b + (2E,6E)-farnesyl diphosphate + H2O = Fe(II)-heme o + diphosphate. Its pathway is porphyrin-containing compound metabolism; heme O biosynthesis; heme O from protoheme: step 1/1. In terms of biological role, converts heme B (protoheme IX) to heme O by substitution of the vinyl group on carbon 2 of heme B porphyrin ring with a hydroxyethyl farnesyl side group. The polypeptide is Protoheme IX farnesyltransferase (Shewanella halifaxensis (strain HAW-EB4)).